Here is a 250-residue protein sequence, read N- to C-terminus: Pyrroloquinoline-quinone synthase (250 aa).

The protein belongs to the PqqC family.

It catalyses the reaction 6-(2-amino-2-carboxyethyl)-7,8-dioxo-1,2,3,4,7,8-hexahydroquinoline-2,4-dicarboxylate + 3 O2 = pyrroloquinoline quinone + 2 H2O2 + 2 H2O + H(+). The protein operates within cofactor biosynthesis; pyrroloquinoline quinone biosynthesis. Its function is as follows. Ring cyclization and eight-electron oxidation of 3a-(2-amino-2-carboxyethyl)-4,5-dioxo-4,5,6,7,8,9-hexahydroquinoline-7,9-dicarboxylic-acid to PQQ. The protein is Pyrroloquinoline-quinone synthase of Xanthomonas oryzae pv. oryzae (strain MAFF 311018).